A 131-amino-acid chain; its full sequence is Peptide methionine sulfoxide reductase MsrB (131 aa).

In terms of domain architecture, MsrB spans 8–130 (LEEWRAMLDP…NSVCLDLVPR (123 aa)). Zn(2+) contacts are provided by Cys47, Cys50, Cys96, and Cys99. Cys119 serves as the catalytic Nucleophile.

It belongs to the MsrB Met sulfoxide reductase family. Zn(2+) is required as a cofactor.

It carries out the reaction L-methionyl-[protein] + [thioredoxin]-disulfide + H2O = L-methionyl-(R)-S-oxide-[protein] + [thioredoxin]-dithiol. In Pseudomonas fluorescens (strain Pf0-1), this protein is Peptide methionine sulfoxide reductase MsrB.